The sequence spans 143 residues: UPF0201 protein Pisl_1658 (143 aa).

It belongs to the UPF0201 family.

The protein is UPF0201 protein Pisl_1658 of Pyrobaculum islandicum (strain DSM 4184 / JCM 9189 / GEO3).